We begin with the raw amino-acid sequence, 190 residues long: Large ribosomal subunit protein bL25 (190 aa).

It belongs to the bacterial ribosomal protein bL25 family. CTC subfamily. In terms of assembly, part of the 50S ribosomal subunit; part of the 5S rRNA/L5/L18/L25 subcomplex. Contacts the 5S rRNA. Binds to the 5S rRNA independently of L5 and L18.

Its function is as follows. This is one of the proteins that binds to the 5S RNA in the ribosome where it forms part of the central protuberance. The protein is Large ribosomal subunit protein bL25 of Neisseria meningitidis serogroup C (strain 053442).